Consider the following 101-residue polypeptide: Movement protein (101 aa).

The chain crosses the membrane as a helical span at residues 30 to 50 (EVAILSFVALICFYLLYLWVL). Residues 75–101 (VDRSNPIPNIPAPPSQGNPGPFVPGTG) form a disordered region.

Belongs to the mastrevirus movement protein family. As to quaternary structure, interacts with the capsid protein (CP). Part of a MP-CP-viral DNA complex.

The protein localises to the host membrane. Involved in the viral transport within, and between cells. This Maize streak virus genotype A (isolate Kenya) (MSV) protein is Movement protein.